The primary structure comprises 204 residues: Pyrrolidone-carboxylate peptidase (204 aa).

Residues Glu78, Cys141, and His165 contribute to the active site.

Belongs to the peptidase C15 family. In terms of assembly, homotetramer.

Its subcellular location is the cytoplasm. The catalysed reaction is Release of an N-terminal pyroglutamyl group from a polypeptide, the second amino acid generally not being Pro.. Functionally, removes 5-oxoproline from various penultimate amino acid residues except L-proline. This is Pyrrolidone-carboxylate peptidase from Levilactobacillus brevis (strain ATCC 367 / BCRC 12310 / CIP 105137 / JCM 1170 / LMG 11437 / NCIMB 947 / NCTC 947) (Lactobacillus brevis).